Consider the following 352-residue polypeptide: Ribosomal RNA large subunit methyltransferase M (352 aa).

S-adenosyl-L-methionine contacts are provided by residues Ser-184, 217–220 (APGG), Asp-236, Asp-256, and Asp-272. The Proton acceptor role is filled by Lys-301.

Belongs to the class I-like SAM-binding methyltransferase superfamily. RNA methyltransferase RlmE family. RlmM subfamily. Monomer.

It localises to the cytoplasm. The enzyme catalyses cytidine(2498) in 23S rRNA + S-adenosyl-L-methionine = 2'-O-methylcytidine(2498) in 23S rRNA + S-adenosyl-L-homocysteine + H(+). Its function is as follows. Catalyzes the 2'-O-methylation at nucleotide C2498 in 23S rRNA. This Pseudomonas aeruginosa (strain UCBPP-PA14) protein is Ribosomal RNA large subunit methyltransferase M.